A 423-amino-acid chain; its full sequence is Alpha-1-antichymotrypsin (423 aa).

Residues 1-23 (MERMLPFLALGLLVAGFCPAVLC) form the signal peptide. N93, N106, N127, N186, and N271 each carry an N-linked (GlcNAc...) asparagine glycan. The tract at residues 369–394 (GTEASAATAVKITLLSALVDPMTIVR) is RCL.

This sequence belongs to the serpin family. In terms of assembly, interacts with DNAJC1. In terms of tissue distribution, plasma.

It localises to the secreted. Its function is as follows. Although its physiological function is unclear, it can inhibit neutrophil cathepsin G and mast cell chymase, both of which can convert angiotensin-1 to the active angiotensin-2. The polypeptide is Alpha-1-antichymotrypsin (SERPINA3) (Pongo abelii (Sumatran orangutan)).